A 32-amino-acid polypeptide reads, in one-letter code: Delta-conotoxin-like CnVIB (32 aa).

3 disulfide bridges follow: Cys-3/Cys-18, Cys-10/Cys-22, and Cys-17/Cys-27. Residues Pro-6 and Pro-14 each carry the 4-hydroxyproline modification.

It belongs to the conotoxin O1 superfamily. In terms of tissue distribution, expressed by the venom duct.

It is found in the secreted. In terms of biological role, delta-conotoxins bind to site 6 of voltage-gated sodium channels (Nav) and inhibit the inactivation process. This toxin acts on Nav1.4/SCN4A and Nav1.6/SCN8A (EC(50)=2.3 uM). In Conus consors (Singed cone), this protein is Delta-conotoxin-like CnVIB.